The sequence spans 302 residues: uncharacterized protein (302 aa).

7 helical membrane-spanning segments follow: residues 25 to 45 (SFIF…LQIF), 58 to 78 (FSYL…VIAL), 104 to 124 (IQVG…WMFL), 158 to 178 (YGLL…ATVL), 182 to 202 (FAWA…QYVP), 215 to 235 (ALSI…GYLL), and 247 to 267 (MMYI…MFYL). One can recognise a PQ-loop domain in the interval 175-245 (ATVLSSNFAW…SRLPGTNWTT (71 aa)).

The protein resides in the membrane. This is an uncharacterized protein from Schizosaccharomyces pombe (strain 972 / ATCC 24843) (Fission yeast).